The primary structure comprises 254 residues: Germin-like protein 4-1 (254 aa).

The first 27 residues, 1–27 (MASRAFAAVFAAVALVVCSSVLPRALA), serve as a signal peptide directing secretion. Cys-37 and Cys-52 are disulfide-bonded. The Cupin type-1 domain occupies 67–220 (KALGVPGNTV…AFMIDKDQVD (154 aa)). His-115, His-117, Glu-122, and His-166 together coordinate Mn(2+).

This sequence belongs to the germin family. Oligomer (believed to be a pentamer but probably hexamer).

It is found in the secreted. The protein resides in the extracellular space. It localises to the apoplast. Functionally, may play a role in plant defense. Probably has no oxalate oxidase activity even if the active site is conserved. This Oryza sativa subsp. japonica (Rice) protein is Germin-like protein 4-1.